The primary structure comprises 485 residues: Cytolytic protein enterolobin (485 aa).

Disulfide bonds link cysteine 34–cysteine 98 and cysteine 183–cysteine 189.

Belongs to the aerolysin family. Oligomerizes as a hexamer. The N-terminus is blocked.

Functionally, cytolytic protein with insecticidal activity. Acts as a pro-inflammatory agent. This chain is Cytolytic protein enterolobin, found in Enterolobium contortisiliquum (Pacara earpod tree).